The chain runs to 81 residues: Photosystem I iron-sulfur center (81 aa).

4Fe-4S ferredoxin-type domains follow at residues 2-31 (SHSV…MVSW) and 39-68 (IASA…VRVY). [4Fe-4S] cluster contacts are provided by cysteine 11, cysteine 14, cysteine 17, cysteine 21, cysteine 48, cysteine 51, cysteine 54, and cysteine 58.

The eukaryotic PSI reaction center is composed of at least 11 subunits. [4Fe-4S] cluster serves as cofactor.

It localises to the plastid. Its subcellular location is the chloroplast thylakoid membrane. It carries out the reaction reduced [plastocyanin] + hnu + oxidized [2Fe-2S]-[ferredoxin] = oxidized [plastocyanin] + reduced [2Fe-2S]-[ferredoxin]. In terms of biological role, apoprotein for the two 4Fe-4S centers FA and FB of photosystem I (PSI); essential for photochemical activity. FB is the terminal electron acceptor of PSI, donating electrons to ferredoxin. The C-terminus interacts with PsaA/B/D and helps assemble the protein into the PSI complex. Required for binding of PsaD and PsaE to PSI. PSI is a plastocyanin/cytochrome c6-ferredoxin oxidoreductase, converting photonic excitation into a charge separation, which transfers an electron from the donor P700 chlorophyll pair to the spectroscopically characterized acceptors A0, A1, FX, FA and FB in turn. The polypeptide is Photosystem I iron-sulfur center (Rhodomonas salina (Cryptomonas salina)).